The chain runs to 366 residues: Phospho-N-acetylmuramoyl-pentapeptide-transferase (366 aa).

The next 10 helical transmembrane spans lie at 3-23 (QIIISGSVAFLVSIFLTPILI), 55-75 (IAIIAGITIGYLVTNIYSYFA), 80-100 (FTASGLLVLGLMLGLGATGFA), 118-138 (AKLISQLAIALVFGLLVLRFP), 161-181 (IAFGGGVLGTIVFLIFIYVVV), 197-217 (LAAGATAFVMGAYTLIAFWQF), 238-258 (IAVLAAGGLGATLGFLWWNAA), 262-282 (IFMGDTGSLALGGLVAGISVV), 290-310 (VIIGALFVIEVASVAIQIAVF), and 341-361 (FWLIAIMAVIAGMAVFYGDWL).

The protein belongs to the glycosyltransferase 4 family. MraY subfamily. The cofactor is Mg(2+).

Its subcellular location is the cell membrane. It catalyses the reaction UDP-N-acetyl-alpha-D-muramoyl-L-alanyl-gamma-D-glutamyl-meso-2,6-diaminopimeloyl-D-alanyl-D-alanine + di-trans,octa-cis-undecaprenyl phosphate = di-trans,octa-cis-undecaprenyl diphospho-N-acetyl-alpha-D-muramoyl-L-alanyl-D-glutamyl-meso-2,6-diaminopimeloyl-D-alanyl-D-alanine + UMP. It participates in cell wall biogenesis; peptidoglycan biosynthesis. Functionally, catalyzes the initial step of the lipid cycle reactions in the biosynthesis of the cell wall peptidoglycan: transfers peptidoglycan precursor phospho-MurNAc-pentapeptide from UDP-MurNAc-pentapeptide onto the lipid carrier undecaprenyl phosphate, yielding undecaprenyl-pyrophosphoryl-MurNAc-pentapeptide, known as lipid I. The protein is Phospho-N-acetylmuramoyl-pentapeptide-transferase of Corynebacterium efficiens (strain DSM 44549 / YS-314 / AJ 12310 / JCM 11189 / NBRC 100395).